The following is a 359-amino-acid chain: Phospho-N-acetylmuramoyl-pentapeptide-transferase (359 aa).

10 helical membrane passes run 23-43, 68-88, 92-112, 126-146, 165-185, 198-218, 235-255, 262-282, 287-307, and 336-356; these read VAFFVAFGLSVFFMPYFIKWA, MGGIVFIISMICASLLCGNLF, VLLGLFCISCFALIGARDDYM, MKFFLLFIVSLIITSILLYIG, AFKIMDISVLALGFWVLVFLA, GLATMPSICALFSLSAFVYVA, SGELVILSVALIGALFGFLWY, VFMGDSGSLALGAFIAFMAIV, ILLLLIGIIFVIEALSVILQV, and KIIVRFWIIAILANIIALLSL.

It belongs to the glycosyltransferase 4 family. MraY subfamily. The cofactor is Mg(2+).

Its subcellular location is the cell inner membrane. The enzyme catalyses UDP-N-acetyl-alpha-D-muramoyl-L-alanyl-gamma-D-glutamyl-meso-2,6-diaminopimeloyl-D-alanyl-D-alanine + di-trans,octa-cis-undecaprenyl phosphate = di-trans,octa-cis-undecaprenyl diphospho-N-acetyl-alpha-D-muramoyl-L-alanyl-D-glutamyl-meso-2,6-diaminopimeloyl-D-alanyl-D-alanine + UMP. It participates in cell wall biogenesis; peptidoglycan biosynthesis. In terms of biological role, catalyzes the initial step of the lipid cycle reactions in the biosynthesis of the cell wall peptidoglycan: transfers peptidoglycan precursor phospho-MurNAc-pentapeptide from UDP-MurNAc-pentapeptide onto the lipid carrier undecaprenyl phosphate, yielding undecaprenyl-pyrophosphoryl-MurNAc-pentapeptide, known as lipid I. The protein is Phospho-N-acetylmuramoyl-pentapeptide-transferase of Helicobacter hepaticus (strain ATCC 51449 / 3B1).